A 1400-amino-acid polypeptide reads, in one-letter code: DNA-directed RNA polymerase subunit beta' (1400 aa).

Zn(2+) contacts are provided by C71, C73, C86, and C89. Mg(2+) is bound by residues D462, D464, and D466. Residues C811, C885, C892, and C895 each contribute to the Zn(2+) site.

The protein belongs to the RNA polymerase beta' chain family. As to quaternary structure, the RNAP catalytic core consists of 2 alpha, 1 beta, 1 beta' and 1 omega subunit. When a sigma factor is associated with the core the holoenzyme is formed, which can initiate transcription. Requires Mg(2+) as cofactor. Zn(2+) is required as a cofactor.

It catalyses the reaction RNA(n) + a ribonucleoside 5'-triphosphate = RNA(n+1) + diphosphate. Functionally, DNA-dependent RNA polymerase catalyzes the transcription of DNA into RNA using the four ribonucleoside triphosphates as substrates. This Brucella suis biovar 1 (strain 1330) protein is DNA-directed RNA polymerase subunit beta'.